The chain runs to 603 residues: Sulfoacetaldehyde acetyltransferase (603 aa).

The protein belongs to the TPP enzyme family. In terms of assembly, homodimer or homotetramer. Mg(2+) serves as cofactor. The cofactor is thiamine diphosphate.

It is found in the cytoplasm. The enzyme catalyses acetyl phosphate + sulfite + H(+) = sulfoacetaldehyde + phosphate. It functions in the pathway organosulfur degradation; taurine degradation via aerobic pathway; acetyl phosphate and sulfite from taurine: step 2/2. This is Sulfoacetaldehyde acetyltransferase (xsc) from Alcaligenes xylosoxydans xylosoxydans (Achromobacter xylosoxidans).